The chain runs to 183 residues: Senescence-associated protein DIN1 (183 aa).

Residues 83 to 183 (AQAGYKHLDV…WTENELPVEE (101 aa)) form the Rhodanese domain.

Is thought to act during the early stages of leaf senescence. The sequence is that of Senescence-associated protein DIN1 (DIN1) from Raphanus sativus (Radish).